The chain runs to 249 residues: Ribitol 2-dehydrogenase (249 aa).

Position 20–43 (20–43 (TGAASGIGLECARTLLGAGAKVVL)) interacts with NAD(+). Residue Tyr160 is the Proton acceptor of the active site.

Belongs to the short-chain dehydrogenases/reductases (SDR) family. Homotetramer.

The enzyme catalyses ribitol + NAD(+) = D-ribulose + NADH + H(+). This chain is Ribitol 2-dehydrogenase (rbtD), found in Klebsiella aerogenes (Enterobacter aerogenes).